We begin with the raw amino-acid sequence, 464 residues long: GPI mannosyltransferase 2 (464 aa).

The Cytoplasmic portion of the chain corresponds to 1–70; the sequence is MYYIGHPSYY…MTRSGYNYFK (70 aa). A helical membrane pass occupies residues 71 to 91; that stretch reads GICVCTFLLSTILYLGIAVIM. Over 92-166 the chain is Lumenal; the sequence is SHLCVFDDTA…ISFLAFRSKD (75 aa). 2 N-linked (GlcNAc...) asparagine glycosylation sites follow: N108 and N139. The chain crosses the membrane as a helical span at residues 167-187; it reads VVLLGIVSCFASIFFHAIACY. Topologically, residues 188–219 are cytoplasmic; sequence ALYLLTKSIFSNQKMTAYTVIFYCFSPSGIYM. Residues 220 to 240 traverse the membrane as a helical segment; that stretch reads SVGYTESLFAAFSFLGLLLFI. Residues 241–260 are Lumenal-facing; that stretch reads KKQQYPAAFLWSLATLIRSN. The helical transmembrane segment at 261-281 threads the bilayer; that stretch reads GIFWCIFFGMPAIGTLKISLE. The Cytoplasmic portion of the chain corresponds to 282–289; sequence RLQLTFMQ. A helical transmembrane segment spans residues 290–309; the sequence is VSQLVGYGTKCLIILVPFFY. Residues 310 to 356 are Lumenal-facing; the sequence is NQYLGFKLFCPGVAWCNKSLPLIYPAVQEKYWNVGFLRYWTLNNIPN. N-linked (GlcNAc...) asparagine glycosylation is present at N326. Residues 357–377 traverse the membrane as a helical segment; sequence FLFALLSIIPILFALFYSISG. Residues 378 to 388 lie on the Cytoplasmic side of the membrane; sequence STLHSFRSIKS. A helical transmembrane segment spans residues 389-409; the sequence is HLVLSALYLYIGCFHMHTQVL. Over 410–440 the chain is Lumenal; that stretch reads NRMSSALPLLYWSMAHATLYAKSRNLKAFGH. Residues 441–461 traverse the membrane as a helical segment; sequence CILFVWIVYTVIQAGLYGSFL. The Cytoplasmic segment spans residues 462–464; sequence PPA.

The protein belongs to the PIGV family. Part of the GPI mannosyltransferase 2 complex composed of gpi18 and C167.09.

The protein resides in the endoplasmic reticulum membrane. The protein operates within glycolipid biosynthesis; glycosylphosphatidylinositol-anchor biosynthesis. Its function is as follows. Mannosyltransferase involved in glycosylphosphatidylinositol-anchor biosynthesis. Responsible for the transfer of the second mannose to the glycosylphosphatidylinositol during GPI precursor assembly. The chain is GPI mannosyltransferase 2 (gpi18) from Schizosaccharomyces pombe (strain 972 / ATCC 24843) (Fission yeast).